Here is a 116-residue protein sequence, read N- to C-terminus: Ribosome-binding factor A (116 aa).

It belongs to the RbfA family. Monomer. Binds 30S ribosomal subunits, but not 50S ribosomal subunits or 70S ribosomes.

It localises to the cytoplasm. One of several proteins that assist in the late maturation steps of the functional core of the 30S ribosomal subunit. Associates with free 30S ribosomal subunits (but not with 30S subunits that are part of 70S ribosomes or polysomes). Required for efficient processing of 16S rRNA. May interact with the 5'-terminal helix region of 16S rRNA. In Streptococcus pneumoniae (strain ATCC BAA-255 / R6), this protein is Ribosome-binding factor A.